Consider the following 418-residue polypeptide: MAP kinase-interacting serine/threonine-protein kinase 1 (418 aa).

Residues 1–23 (MVSSQPVPFDDGGKRRKKKRKTR) form a disordered region. The Protein kinase domain occupies 37-321 (RLTDELLGEG…AFQVLQHPWL (285 aa)). ATP is bound by residues 43-51 (LGEGAYAKV) and K66. The Proton acceptor role is filled by D158. A disordered region spans residues 384-418 (PPSKSRLAKRRAQAHARKGGSHPTHSTVTASQGTP). Residues 389-403 (RLAKRRAQAHARKGG) are compositionally biased toward basic residues. Residues 406–418 (PTHSTVTASQGTP) show a composition bias toward polar residues.

This sequence belongs to the protein kinase superfamily. CAMK Ser/Thr protein kinase family. The cofactor is Mg(2+).

The enzyme catalyses L-seryl-[protein] + ATP = O-phospho-L-seryl-[protein] + ADP + H(+). It catalyses the reaction L-threonyl-[protein] + ATP = O-phospho-L-threonyl-[protein] + ADP + H(+). In terms of biological role, may play a role in the response to environmental stress and cytokines. Appears to regulate translation by phosphorylating EIF4E, thus increasing the affinity of this protein for the 7-methylguanosine-containing mRNA cap. This is MAP kinase-interacting serine/threonine-protein kinase 1 (mknk1) from Xenopus laevis (African clawed frog).